Here is a 353-residue protein sequence, read N- to C-terminus: Ornithine racemase (353 aa).

Lys35 serves as the catalytic Proton acceptor. At Lys35 the chain carries N6-(pyridoxal phosphate)lysine. Residue Arg128 participates in substrate binding.

The protein belongs to the alanine racemase family. In terms of assembly, homodimer. Pyridoxal 5'-phosphate is required as a cofactor.

The enzyme catalyses L-ornithine = D-ornithine. Its function is as follows. Involved in the ornithine fermentation pathway. Catalyzes the conversion of L-ornithine to D-ornithine. OR could also racemize basic amino acids such as lysine and arginine. Serine, asparagine and alanine could be also converted by OR, but at a lower rate. This is Ornithine racemase from Acetoanaerobium sticklandii (strain ATCC 12662 / DSM 519 / JCM 1433 / CCUG 9281 / NCIMB 10654 / HF) (Clostridium sticklandii).